Reading from the N-terminus, the 457-residue chain is UDP-N-acetylmuramate--L-alanine ligase (457 aa).

109-115 (GTDGKTT) contributes to the ATP binding site.

The protein belongs to the MurCDEF family.

The protein resides in the cytoplasm. The enzyme catalyses UDP-N-acetyl-alpha-D-muramate + L-alanine + ATP = UDP-N-acetyl-alpha-D-muramoyl-L-alanine + ADP + phosphate + H(+). The protein operates within cell wall biogenesis; peptidoglycan biosynthesis. Its function is as follows. Cell wall formation. In Thermotoga neapolitana (strain ATCC 49049 / DSM 4359 / NBRC 107923 / NS-E), this protein is UDP-N-acetylmuramate--L-alanine ligase.